The following is a 472-amino-acid chain: D-inositol 3-phosphate glycosyltransferase (472 aa).

Residue H48 coordinates 1D-myo-inositol 3-phosphate. UDP-N-acetyl-alpha-D-glucosamine contacts are provided by residues 54–55 (QP) and G62. Residues 59-64 (DAGGMN), K117, Y150, T174, and R194 contribute to the 1D-myo-inositol 3-phosphate site. Positions 282, 287, and 348 each coordinate UDP-N-acetyl-alpha-D-glucosamine. Residues F357, R358, and A360 each coordinate Mg(2+). Residues E370 and E378 each contribute to the UDP-N-acetyl-alpha-D-glucosamine site. Mg(2+) is bound at residue T384.

The protein belongs to the glycosyltransferase group 1 family. MshA subfamily. As to quaternary structure, homodimer.

It carries out the reaction 1D-myo-inositol 3-phosphate + UDP-N-acetyl-alpha-D-glucosamine = 1D-myo-inositol 2-acetamido-2-deoxy-alpha-D-glucopyranoside 3-phosphate + UDP + H(+). In terms of biological role, catalyzes the transfer of a N-acetyl-glucosamine moiety to 1D-myo-inositol 3-phosphate to produce 1D-myo-inositol 2-acetamido-2-deoxy-glucopyranoside 3-phosphate in the mycothiol biosynthesis pathway. The polypeptide is D-inositol 3-phosphate glycosyltransferase (Streptomyces griseus subsp. griseus (strain JCM 4626 / CBS 651.72 / NBRC 13350 / KCC S-0626 / ISP 5235)).